We begin with the raw amino-acid sequence, 770 residues long: Signal transducer and activator of transcription 3 (770 aa).

At Ala-2 the chain carries N-acetylalanine. N6-acetyllysine is present on residues Lys-49 and Lys-87. The Essential for nuclear import signature appears at 150–162 (DVRKRVQDLEQKM). One can recognise an SH2 domain in the interval 580-670 (WNEGYIMGFI…DATNILVSPL (91 aa)). Lys-601, Lys-615, and Lys-631 each carry allysine; alternate. N6-acetyllysine; alternate is present on residues Lys-601, Lys-615, and Lys-631. Position 640 is a phosphotyrosine; by TYK2 (Tyr-640). Allysine; alternate is present on Lys-685. Lys-685 bears the N6-acetyllysine; alternate mark. At Tyr-705 the chain carries Phosphotyrosine; by FER and PTK6. Lys-707 carries the post-translational modification N6-acetyllysine. Thr-714 is modified (phosphothreonine). Position 727 is a phosphoserine; by DYRK2, NLK, NEK6, IRAK1, RPS6KA5, ZIPK/DAPK3 and PKC/PRKCE (Ser-727).

The protein belongs to the transcription factor STAT family. In terms of assembly, forms a homodimer or a heterodimer with a related family member (at least STAT1). Component of a promoter-binding complex composed of STAT3, NFATC3 and NFATC4; complex formation is enhanced by calcineurin. Interacts with IL31RA, NCOA1, PELP1, SIPAR, SOCS7, STATIP1 and TMF1. Interacts with IL23R in presence of IL23. Interacts (via SH2 domain) with NLK. Interacts with ARL2BP; the interaction is enhanced by LIF and JAK1 expression. Interacts with KPNA4 and KPNA5; KPNA4 may be the primary mediator of nuclear import. Interacts with CAV2; the interaction is increased on insulin-induced tyrosine phosphorylation of CAV2 and leads to STAT3 activation. Interacts with ARL2BP; interaction is enhanced with ARL2. Interacts with NEK6. Binds to CDK9 when activated and nuclear. Interacts with BMX. Interacts with ZIPK/DAPK3. Interacts with PIAS3; the interaction occurs on stimulation by IL6, CNTF or OSM and inhibits the DNA binding activity of STAT3. In prostate cancer cells, interacts with PRKCE and promotes DNA binding activity of STAT3. Interacts with STMN3, antagonizing its microtubule-destabilizing activity. Interacts with the 'Lys-129' acetylated form of BIRC5/survivin. Interacts with FER. Interacts (via SH2 domain) with EIF2AK2/PKR (via the kinase catalytic domain). Interacts with FGFR4. Interacts with INPP5F; the interaction is independent of STAT3 Tyr-705 phosphorylation status. Interacts with OCIAD1. Interacts with OCIAD2. Interacts (unphosphorylated or phosphorylated at Ser-727) with PHB1. Interacts and may form heterodimers with NHLH1. Found in a complex with SLC39A6, SLC39A10 and with the 'Ser-727' phosphorylated form of STAT3 throughout mitosis. Interacts (when acetylated) with EP300 (via bromo domain); interaction takes place following STAT3 acetylation by EP300 and promotes enhanceosome assembly. Interacts (when acetylated) with BRD2 (via bromo domain); interaction promotes STAT3 recruitment to chromatin and T-helper Th17 cell differentiation. Interacts with FAM220A/SIPAR; the interaction occurs in both the nucleus and the cytoplasm, is enhanced by IL6 and promotes STAT3 dephosphorylation. Interacts in both unphosphorylated and phosphorylated forms with FAM220A but interacts preferentially in the phosphorylated form in the nucleus. Interacts with PTPN2; the interaction is promoted by FAM220A and leads to STAT3 dephosphorylation which negatively regulates STAT3 transcriptional activator activity. Post-translationally, activated through tyrosine phosphorylation by BMX. Tyrosine phosphorylated in response to IL6, IL11, CNTF, LIF, KITLG/SCF, CSF1, EGF, PDGF, IFN-alpha, LEP and OSM. Activated KIT promotes phosphorylation on tyrosine residues and subsequent translocation to the nucleus. Tyrosine phosphorylated in response to constitutively activated FGFR1, FGFR2, FGFR3 and FGFR4. Phosphorylated on serine upon DNA damage, probably by ATM or ATR. Serine phosphorylation is important for the formation of stable DNA-binding STAT3 homodimers and maximal transcriptional activity. ARL2BP may participate in keeping the phosphorylated state of STAT3 within the nucleus. Tyrosine phosphorylated upon stimulation with EGF. Upon LPS challenge, phosphorylated within the nucleus by IRAK1. Upon UV-A treatment, phosphorylated on Ser-727 by RPS6KA5. Dephosphorylation on tyrosine residues by PTPN2 negatively regulates IL6/interleukin-6 signaling. Phosphorylation at Tyr-705 by PTK6, isoform M2 of PKM (PKM2) or FER leads to an increase of its transcriptional activity. Phosphorylation at Tyr-705 is increased in the presence of calcineurin. Phosphorylation at Tyr-640 by TYK2 negatively regulates transcriptional activity. Acetylated on lysine residues by EP300/p300, promoting its activation. Acetylation at Lys-49 and Lys-87 by EP300/p300 promotes its activation. Acetylation at Lys-87 by EP300/p300 promotes its association with BRD2 and recruitment to chromatin. Deacetylated at Lys-49 and Lys-87 by HDAC1. Acetylation at Lys-685 by EP300/p300 promotes its homodimerization and activation. Deacetylated at Lys-685 by HDAC3. Acetylated on lysine residues by CREBBP. Deacetylation by LOXL3 leads to disrupt STAT3 dimerization and inhibit STAT3 transcription activity. Oxidation of lysine residues to allysine on STAT3 preferentially takes place on lysine residues that are acetylated. In terms of processing, some lysine residues are oxidized to allysine by LOXL3, leading to disrupt STAT3 dimerization and inhibit STAT3 transcription activity. Oxidation of lysine residues to allysine on STAT3 preferentially takes place on lysine residues that are acetylated. Post-translationally, (Microbial infection) Phosphorylated on Tyr-705 in the presence of S.typhimurium SarA. Expressed in ventricular cardiomyocytes (at protein level). Expressed in the lung (at protein level). Expressed in the liver, spleen and kidney. As to expression, expressed in the liver.

It is found in the cytoplasm. It localises to the nucleus. Signal transducer and transcription activator that mediates cellular responses to interleukins, KITLG/SCF, LEP and other growth factors. Once activated, recruits coactivators, such as NCOA1 or MED1, to the promoter region of the target gene. May mediate cellular responses to activated FGFR1, FGFR2, FGFR3 and FGFR4. Upon activation of IL6ST/gp130 signaling by interleukin-6 (IL6), binds to the IL6-responsive elements identified in the promoters of various acute-phase protein genes. Activated by IL31 through IL31RA. Acts as a regulator of inflammatory response by regulating differentiation of naive CD4(+) T-cells into T-helper Th17 or regulatory T-cells (Treg): acetylation promotes its transcription activity and cell differentiation while deacetylation and oxidation of lysine residues by LOXL3 inhibits differentiation. Involved in cell cycle regulation by inducing the expression of key genes for the progression from G1 to S phase, such as CCND1. Mediates the effects of LEP on melanocortin production, body energy homeostasis and lactation. May play an apoptotic role by transctivating BIRC5 expression under LEP activation. Cytoplasmic STAT3 represses macroautophagy by inhibiting EIF2AK2/PKR activity. Plays a crucial role in basal beta cell functions, such as regulation of insulin secretion. Following JAK/STAT signaling activation and as part of a complex with NFATC3 and NFATC4, binds to the alpha-beta E4 promoter region of CRYAB and activates transcription in cardiomyocytes. Plays an important role in host defense in methicillin-resistant S.aureus lung infection by regulating the expression of the antimicrobial lectin REG3G. This chain is Signal transducer and activator of transcription 3, found in Mus musculus (Mouse).